Here is a 201-residue protein sequence, read N- to C-terminus: 3-isopropylmalate dehydratase small subunit (201 aa).

The protein belongs to the LeuD family. LeuD type 1 subfamily. In terms of assembly, heterodimer of LeuC and LeuD.

It carries out the reaction (2R,3S)-3-isopropylmalate = (2S)-2-isopropylmalate. It functions in the pathway amino-acid biosynthesis; L-leucine biosynthesis; L-leucine from 3-methyl-2-oxobutanoate: step 2/4. Its function is as follows. Catalyzes the isomerization between 2-isopropylmalate and 3-isopropylmalate, via the formation of 2-isopropylmaleate. This Shewanella baltica (strain OS223) protein is 3-isopropylmalate dehydratase small subunit.